Consider the following 504-residue polypeptide: Carnosic acid synthase (504 aa).

Residues 4-24 (FIILSLAFIAAWVVYSRWSEY) traverse the membrane as a helical segment. Cys-447 contributes to the heme binding site.

Belongs to the cytochrome P450 family. The cofactor is heme. As to expression, expressed in glandular trichomes of young leaves.

The protein resides in the membrane. The catalysed reaction is 11-hydroxyferruginol + 3 reduced [NADPH--hemoprotein reductase] + 3 O2 = carnosate + 3 oxidized [NADPH--hemoprotein reductase] + 4 H2O + 4 H(+). It carries out the reaction miltiradiene + 2 reduced [NADPH--hemoprotein reductase] + 2 O2 = miltiradien-20-al + 2 oxidized [NADPH--hemoprotein reductase] + 3 H2O + 2 H(+). The enzyme catalyses ferruginol + 3 reduced [NADPH--hemoprotein reductase] + 3 O2 = pisiferate + 3 oxidized [NADPH--hemoprotein reductase] + 4 H2O + 4 H(+). The protein operates within secondary metabolite biosynthesis; terpenoid biosynthesis. Monooxygenase involved in the biosynthesis of carnosate, a potent antioxidant labdane-related diterpene natural products. Catalyzes the oxidation of 11-hydroxyferruginol to produce carnosate. Mediates the conversion of miltiradien into miltiradien-20-al. Also involved in the production of pisiferic acid and derivative products from ferruginol. This Rosmarinus officinalis (Rosemary) protein is Carnosic acid synthase.